The following is a 258-amino-acid chain: Acyl-[acyl-carrier-protein]--UDP-N-acetylglucosamine O-acyltransferase (258 aa).

It belongs to the transferase hexapeptide repeat family. LpxA subfamily. As to quaternary structure, homotrimer.

It is found in the cytoplasm. The enzyme catalyses a (3R)-hydroxyacyl-[ACP] + UDP-N-acetyl-alpha-D-glucosamine = a UDP-3-O-[(3R)-3-hydroxyacyl]-N-acetyl-alpha-D-glucosamine + holo-[ACP]. It participates in glycolipid biosynthesis; lipid IV(A) biosynthesis; lipid IV(A) from (3R)-3-hydroxytetradecanoyl-[acyl-carrier-protein] and UDP-N-acetyl-alpha-D-glucosamine: step 1/6. Functionally, involved in the biosynthesis of lipid A, a phosphorylated glycolipid that anchors the lipopolysaccharide to the outer membrane of the cell. This Thermodesulfovibrio yellowstonii (strain ATCC 51303 / DSM 11347 / YP87) protein is Acyl-[acyl-carrier-protein]--UDP-N-acetylglucosamine O-acyltransferase.